Here is a 147-residue protein sequence, read N- to C-terminus: MLADAEWNEKKVLDRRTSRDHVLKGVSGGFAQLCHGKEAPLKRMNPDDWIIYYSPKQNLKDDAPYQKFTAVGEVSDNRVYKVHAGEGFSPYRRKINFLKCRETPIHPFIPNLSFIKNKRHWGYSFRFGHIEISEHDFKLIVKQMVKI.

Belongs to the UPF0310 family.

The protein is UPF0310 protein in gntR 5'region (oug) of Bacillus licheniformis.